A 913-amino-acid chain; its full sequence is SUN domain-containing protein 1 (913 aa).

The LMNA-binding stretch occupies residues 1-139; sequence MDFSRLHTYT…VLRHPVLDES (139 aa). Topologically, residues 1–415 are nuclear; sequence MDFSRLHTYT…LTRCLRNICK (415 aa). Ser-48 and Ser-66 each carry phosphoserine. Polar residues predominate over residues 69–81; the sequence is SQAIDSHISTSRA. The segment at 69–120 is disordered; sequence SQAIDSHISTSRATPAKGRETRTVKQRRSASKPAFSINHLSGKGLSSSTSHD. Positions 108 to 120 are enriched in low complexity; the sequence is LSGKGLSSSTSHD. A Phosphoserine modification is found at Ser-139. The segment at 209 to 302 is SYNE2-binding; that stretch reads SRVYSRDRTL…MTAGELSRVD (94 aa). The interval 223-302 is EMD-binding; that stretch reads VSFYLDRTLW…MTAGELSRVD (80 aa). The helical transmembrane segment at 416–436 threads the bilayer; it reads VFVLLLPLLLLLGAGVSLWGQ. Residues 437 to 913 are Perinuclear space-facing; that stretch reads GNFFSLLPVL…RFRVHGEPIQ (477 aa). The disordered stretch occupies residues 456–485; it reads RVDDSKGMHRPGPLPPSPPPKVDHKASQWP. 2 coiled-coil regions span residues 491-533 and 563-638; these read GQKV…EGLS and HHDH…CEQA. The tract at residues 703–913 is sufficient for interaction with SYNE1 and SYNE2; the sequence is TSEAIVSAVN…RFRVHGEPIQ (211 aa). In terms of domain architecture, SUN spans 751–912; sequence GGSILSTRCS…YRFRVHGEPI (162 aa).

In terms of assembly, core component of the LINC complex which is composed of inner nuclear membrane SUN domain-containing proteins coupled to outer nuclear membrane KASH domain-containing nesprins. SUN and KASH domain-containing proteins seem to bind each other promiscuously; however, differentially expression of LINC complex constituents is giving rise to specific assemblies. At least SUN1/2-containing core LINC complexes are proposed to be hexameric composed of three protomers of each KASH and SUN domain-containing protein. Interacts with KASH5 (via the last 22 amino acids); this interaction mediates KASH5 telomere localization by forming a SUN1:KASH5 LINC complex. Isoform 5 is proposed to form a non-nuclear spermatogenesis-specific LINC complex with SYNE3 during sperm head formation. Interacts with SYNE2 and SYNE1; probably forming respective LINC complexes. Interacts with A-type lamin with a strong preference for unprocessed A-type lamin compared with the mature protein. Interaction with lamins B1 and C is hardly detectable. Interacts with NAT10. Interacts with EMD and TSNAX. Associates with the nuclear pore complex (NPC). Interacts with CCDC79/TERB1; promoting the accumulation of the LINC complex complexes at the telomere-nuclear envelope attachment sites. Interacts with IRAG2. Interacts (via KASH domain) with TMEM258. Post-translationally, the disulfide bond with KASH domain-containing nesprins is required for stability of the respective LINC complexes under tensile forces. Widely expressed. Expressed in cochlear outer hair cells (at protein level). Seven isoforms are expressed in testis including testis-specific isoform 5. Isoform 5 is the only isoform expressed at the end of sperm differentiation. Six isoforms are expressed in muscle, heart and brain, four isoforms in kidney and three isoforms in liver.

Its subcellular location is the nucleus inner membrane. It is found in the cytoplasmic vesicle. The protein resides in the secretory vesicle. It localises to the acrosome outer membrane. Its function is as follows. As a component of the LINC (LInker of Nucleoskeleton and Cytoskeleton) complex involved in the connection between the nuclear lamina and the cytoskeleton. The nucleocytoplasmic interactions established by the LINC complex play an important role in the transmission of mechanical forces across the nuclear envelope and in nuclear movement and positioning. Required for interkinetic nuclear migration (INM) and essential for nucleokinesis and centrosome-nucleus coupling during radial neuronal migration in the cerebral cortex and during glial migration. Involved in telomere attachment to nuclear envelope in the prophase of meiosis implicating a SUN1/2:KASH5 LINC complex in which SUN1 and SUN2 seem to act at least partial redundantly. Required for gametogenesis and involved in selective gene expression of coding and non-coding RNAs needed for gametogenesis. Helps to define the distribution of nuclear pore complexes (NPCs). Required for efficient localization of SYNE4 in the nuclear envelope. May be involved in nuclear remodeling during sperm head formation in spermatogenesis. May play a role in DNA repair by suppressing non-homologous end joining repair to facilitate the repair of DNA cross-links. In terms of biological role, isoform 5 may be involved in nuclear remodeling during sperm head formation in spermatogenesis. A probable SUN1 isoform 5:SYNE3 LINC complex may tether spermatid nuclei to anterior cytoskeletal structures such as actin filaments present at membraneous junctions of spermatids and Sertoli cells. In Mus musculus (Mouse), this protein is SUN domain-containing protein 1.